Consider the following 322-residue polypeptide: Hapalindole dimethylallyltransferase (322 aa).

Dimethylallyl diphosphate contacts are provided by Arg-46, Arg-60, Lys-115, Asn-166, Tyr-168, Arg-221, Tyr-225, and Lys-275.

This sequence belongs to the aromatic prenyltransferase family.

The enzyme catalyses hapalindole G + dimethylallyl diphosphate = ambiguine A + diphosphate. It carries out the reaction hapalindole U + dimethylallyl diphosphate + H(+) = ambiguine H + diphosphate. With respect to regulation, activity is slightly increased in the presence of Mg(2+). Functionally, prenyltransferase involved in the biosynthesis of ambiguines, a family of hapalindole-type alkaloids. Catalyzes the reverse prenylation of hapalindole G or U at the C2 position with dimethylallyl diphosphate (DMAPP) to generate ambiguine A or H, respectively. In addition, accepts hapalindole A, an epimer of hapalindole G, and catalyzes normal prenylation at its C2 position. The polypeptide is Hapalindole dimethylallyltransferase (Fischerella ambigua (strain UTEX 1903)).